The sequence spans 517 residues: Maturase K (517 aa).

It belongs to the intron maturase 2 family. MatK subfamily.

The protein resides in the plastid. The protein localises to the chloroplast. Usually encoded in the trnK tRNA gene intron. Probably assists in splicing its own and other chloroplast group II introns. This Juncus effusus (Soft rush) protein is Maturase K.